We begin with the raw amino-acid sequence, 223 residues long: Cytotoxic T-lymphocyte protein 4 (223 aa).

Residues methionine 1–serine 35 form the signal peptide. Residues methionine 38–aspartate 161 lie on the Extracellular side of the membrane. One can recognise an Ig-like V-type domain in the interval histidine 39–tyrosine 140. The tract at residues valine 46–serine 50 is homodimerization. Cystine bridges form between cysteine 58–cysteine 129 and cysteine 85–cysteine 103. Asparagine 113 is a glycosylation site (N-linked (GlcNAc...) asparagine). Residues leucine 134–tyrosine 139 are important for interaction with CD80 and CD86. Asparagine 145 carries an N-linked (GlcNAc...) asparagine glycan. Residues tyrosine 150–glutamate 155 are homodimerization. A helical membrane pass occupies residues phenylalanine 162–threonine 182. At alanine 183–asparagine 223 the chain is on the cytoplasmic side. At tyrosine 201 the chain carries Phosphotyrosine; by TXK and JAK2.

Homodimer; disulfide-linked. Binds to CD80/B7-1 and CD86/B7.2. Interacts with ICOSLG. In terms of processing, N-glycosylation is important for dimerization. Phosphorylation at Tyr-201 prevents binding to the AP-2 adapter complex, blocks endocytosis, and leads to retention of CTLA4 on the cell surface.

It is found in the cell membrane. Inhibitory receptor acting as a major negative regulator of T-cell responses. The affinity of CTLA4 for its natural B7 family ligands, CD80 and CD86, is considerably stronger than the affinity of their cognate stimulatory coreceptor CD28. This is Cytotoxic T-lymphocyte protein 4 (CTLA4) from Sus scrofa (Pig).